The sequence spans 552 residues: MEDPKSLSAPLTAFNADTTTADETPAAQKKYEDDNGQKAGSESSENTKNSDHGDATEVNTPKSADLEANALRNSSVSRSNQEQEKSEEAIDPNIVDWDGPNDPSNPLNWPTWKIKTHIFLVSSITFISPLGSSILATGIPQILAEFRSTNAELGSLVVSVYLLGFAAGPLVIAPLSELYGRMPLYHICNILFAILTVGCALGPTLNSEIGLRFLQGCAGSAPLAIGGGTISDLIPQERRGKYMGIYALGPTLGPIFGPVAGGFLTGAKGWRWLMWLLLMIEGSVTLVNFVVMRETYGVVIMARKTRALQKQTGNMSLRSRYDQGLTTRRLWRNTLIRPAKMLVYSPIIFLLSLFMAMVYGYLYLLFTTFPVVFGEYYHFSIGITGLVYLGLGIGNIIGLVIFGVFSDKILLAKAASGELKPEYRLLPMVWTSFTVPIGLFIYGWSARYAVHWIVPIIGTVFFGIGLLVTLVCTLTYIVDAFTEYAASATAANAVMRSVVGATLPLAGPSMYQALGIGWGNSLLAFIALAGCPIPWVFYVYGERIRKSSKATY.

The tract at residues 1 to 102 (MEDPKSLSAP…NIVDWDGPND (102 aa)) is disordered. Low complexity predominate over residues 16 to 27 (ADTTTADETPAA). Composition is skewed to polar residues over residues 38–47 (KAGSESSENT) and 71–80 (LRNSSVSRSN). Asparagine 73 is a glycosylation site (N-linked (GlcNAc...) asparagine). 6 consecutive transmembrane segments (helical) span residues 118-138 (IFLV…LATG), 153-173 (LGSL…LVIA), 182-202 (MPLY…CALG), 214-234 (LQGC…SDLI), 244-264 (GIYA…GGFL), and 272-292 (WLMW…FVVM). Asparagine 314 carries an N-linked (GlcNAc...) asparagine glycan. A run of 6 helical transmembrane segments spans residues 346–366 (PIIF…YLLF), 385–405 (GLVY…FGVF), 425–445 (LLPM…YGWS), 452–472 (WIVP…TLVC), 498–518 (VVGA…GIGW), and 521–541 (SLLA…YVYG).

It belongs to the major facilitator superfamily.

It is found in the cell membrane. Functionally, MFS-type transporter; part of the gene cluster that mediates the biosynthesis of atranorin, a depside of polyketide origin that accumulates in the cortical or medullary layers of lichen thalli. The polypeptide is MFS-type transporter atr4 (Stereocaulon alpinum (Alpine snow lichen)).